Here is a 478-residue protein sequence, read N- to C-terminus: Glutamate-1-semialdehyde 2,1-aminomutase, chloroplastic (478 aa).

Lys-318 bears the N6-(pyridoxal phosphate)lysine mark.

Belongs to the class-III pyridoxal-phosphate-dependent aminotransferase family. HemL subfamily. In terms of assembly, homodimer. Pyridoxal 5'-phosphate is required as a cofactor.

Its subcellular location is the plastid. The protein resides in the chloroplast. The enzyme catalyses (S)-4-amino-5-oxopentanoate = 5-aminolevulinate. It participates in porphyrin-containing compound metabolism; protoporphyrin-IX biosynthesis; 5-aminolevulinate from L-glutamyl-tRNA(Glu): step 2/2. Its pathway is porphyrin-containing compound metabolism; chlorophyll biosynthesis. The chain is Glutamate-1-semialdehyde 2,1-aminomutase, chloroplastic (GSA) from Nicotiana tabacum (Common tobacco).